The following is a 180-amino-acid chain: Large ribosomal subunit protein uL5 (180 aa).

The protein belongs to the universal ribosomal protein uL5 family. Part of the 50S ribosomal subunit; part of the 5S rRNA/L5/L18/L25 subcomplex. Contacts the 5S rRNA and the P site tRNA. Forms a bridge to the 30S subunit in the 70S ribosome.

In terms of biological role, this is one of the proteins that bind and probably mediate the attachment of the 5S RNA into the large ribosomal subunit, where it forms part of the central protuberance. In the 70S ribosome it contacts protein S13 of the 30S subunit (bridge B1b), connecting the 2 subunits; this bridge is implicated in subunit movement. Contacts the P site tRNA; the 5S rRNA and some of its associated proteins might help stabilize positioning of ribosome-bound tRNAs. This Ruminiclostridium cellulolyticum (strain ATCC 35319 / DSM 5812 / JCM 6584 / H10) (Clostridium cellulolyticum) protein is Large ribosomal subunit protein uL5.